Reading from the N-terminus, the 207-residue chain is LexA repressor (207 aa).

Residues 28-48 (VREIGEAVGLASSFTVHGHLS) constitute a DNA-binding region (H-T-H motif). Active-site for autocatalytic cleavage activity residues include Ser-130 and Lys-168.

The protein belongs to the peptidase S24 family. Homodimer.

It carries out the reaction Hydrolysis of Ala-|-Gly bond in repressor LexA.. Its function is as follows. Represses a number of genes involved in the response to DNA damage (SOS response), including recA and lexA. In the presence of single-stranded DNA, RecA interacts with LexA causing an autocatalytic cleavage which disrupts the DNA-binding part of LexA, leading to derepression of the SOS regulon and eventually DNA repair. This chain is LexA repressor, found in Staphylococcus aureus (strain Newman).